The sequence spans 145 residues: MRTTFMAKANEVERKWYVVDAEGQTLGRLSTEVASILRGKHKPTFTPHVDTGDHVIIINAEKIHLTGNKLNDKIYYRHTNHPGGLKQRTALEMRTNYPVQMLELAIKGMLPKGRLGRQVSKKLNVYAGAEHPHQAQQPEVYELRG.

This sequence belongs to the universal ribosomal protein uL13 family. Part of the 50S ribosomal subunit.

Functionally, this protein is one of the early assembly proteins of the 50S ribosomal subunit, although it is not seen to bind rRNA by itself. It is important during the early stages of 50S assembly. The sequence is that of Large ribosomal subunit protein uL13 from Bacillus mycoides (strain KBAB4) (Bacillus weihenstephanensis).